The sequence spans 804 residues: Leucine--tRNA ligase (804 aa).

A 'HIGH' region motif is present at residues 40-51 (PYPSGQGLHVGH). The short motif at 576–580 (KMSKS) is the 'KMSKS' region element. Lys-579 is an ATP binding site.

It belongs to the class-I aminoacyl-tRNA synthetase family.

The protein resides in the cytoplasm. The enzyme catalyses tRNA(Leu) + L-leucine + ATP = L-leucyl-tRNA(Leu) + AMP + diphosphate. This Oceanobacillus iheyensis (strain DSM 14371 / CIP 107618 / JCM 11309 / KCTC 3954 / HTE831) protein is Leucine--tRNA ligase.